A 62-amino-acid chain; its full sequence is Ferredoxin-2 (62 aa).

4Fe-4S ferredoxin-type domains lie at 2 to 28 and 29 to 62; these read AHRI…SAGD and SIYV…IIKV. Positions 9, 12, 15, 19, 38, 41, 50, and 54 each coordinate [4Fe-4S] cluster.

It depends on [4Fe-4S] cluster as a cofactor.

Its function is as follows. Ferredoxins are iron-sulfur proteins that transfer electrons in a wide variety of metabolic reactions. This is Ferredoxin-2 from Chlorobaculum tepidum (strain ATCC 49652 / DSM 12025 / NBRC 103806 / TLS) (Chlorobium tepidum).